The chain runs to 118 residues: Ribulose bisphosphate carboxylase small subunit (118 aa).

The protein belongs to the RuBisCO small chain family. In terms of assembly, heterohexadecamer of 8 large and 8 small subunits.

It is found in the carboxysome. Its function is as follows. RuBisCO catalyzes two reactions: the carboxylation of D-ribulose 1,5-bisphosphate, the primary event in carbon dioxide fixation, as well as the oxidative fragmentation of the pentose substrate in the photorespiration process. Both reactions occur simultaneously and in competition at the same active site. Although the small subunit is not catalytic it is essential for maximal activity. In Thermosynechococcus vestitus (strain NIES-2133 / IAM M-273 / BP-1), this protein is Ribulose bisphosphate carboxylase small subunit.